A 134-amino-acid chain; its full sequence is ATP synthase epsilon chain, chloroplastic (134 aa).

This sequence belongs to the ATPase epsilon chain family. As to quaternary structure, F-type ATPases have 2 components, CF(1) - the catalytic core - and CF(0) - the membrane proton channel. CF(1) has five subunits: alpha(3), beta(3), gamma(1), delta(1), epsilon(1). CF(0) has three main subunits: a, b and c.

It localises to the plastid. It is found in the chloroplast thylakoid membrane. In terms of biological role, produces ATP from ADP in the presence of a proton gradient across the membrane. The polypeptide is ATP synthase epsilon chain, chloroplastic (Drimys granadensis).